Consider the following 213-residue polypeptide: NADH dehydrogenase [ubiquinone] iron-sulfur protein 7, mitochondrial (213 aa).

Residues 1-38 constitute a mitochondrion transit peptide; sequence MAVLSAPGLRGFRILGLRSSVGPAVQARGVHQSVATDG. The interval 31 to 53 is disordered; the sequence is HQSVATDGPSSTQPALPKARAVA. Over residues 33–44 the composition is skewed to polar residues; sequence SVATDGPSSTQP. Positions 88 and 89 each coordinate [4Fe-4S] cluster. Arg-111 carries the hydroxyarginine modification. [4Fe-4S] cluster contacts are provided by Cys-153 and Cys-183.

Belongs to the complex I 20 kDa subunit family. Core subunit of respiratory chain NADH dehydrogenase (Complex I) which is composed of 45 different subunits. This is a component of the iron-sulfur (IP) fragment of the enzyme. [4Fe-4S] cluster is required as a cofactor. Hydroxylated at Arg-111 by NDUFAF5 early in the pathway of assembly of complex I, before the formation of the juncture between peripheral and membrane arms.

It localises to the mitochondrion inner membrane. The enzyme catalyses a ubiquinone + NADH + 5 H(+)(in) = a ubiquinol + NAD(+) + 4 H(+)(out). In terms of biological role, core subunit of the mitochondrial membrane respiratory chain NADH dehydrogenase (Complex I) which catalyzes electron transfer from NADH through the respiratory chain, using ubiquinone as an electron acceptor. Essential for the catalytic activity of complex I. The sequence is that of NADH dehydrogenase [ubiquinone] iron-sulfur protein 7, mitochondrial (NDUFS7) from Homo sapiens (Human).